We begin with the raw amino-acid sequence, 604 residues long: Glutamine--fructose-6-phosphate aminotransferase [isomerizing] (604 aa).

Residue C2 is the Nucleophile; for GATase activity of the active site. One can recognise a Glutamine amidotransferase type-2 domain in the interval C2 to D218. SIS domains lie at I284 to K423 and V456 to P594. Residue K599 is the For Fru-6P isomerization activity of the active site.

Homodimer.

Its subcellular location is the cytoplasm. The catalysed reaction is D-fructose 6-phosphate + L-glutamine = D-glucosamine 6-phosphate + L-glutamate. Catalyzes the first step in hexosamine metabolism, converting fructose-6P into glucosamine-6P using glutamine as a nitrogen source. In Streptococcus agalactiae serotype III (strain NEM316), this protein is Glutamine--fructose-6-phosphate aminotransferase [isomerizing].